A 502-amino-acid chain; its full sequence is Glucose-6-phosphate isomerase (502 aa).

The active-site Proton donor is Glu-331. Active-site residues include His-362 and Lys-471.

It belongs to the GPI family.

The protein localises to the cytoplasm. It catalyses the reaction alpha-D-glucose 6-phosphate = beta-D-fructose 6-phosphate. It functions in the pathway carbohydrate biosynthesis; gluconeogenesis. The protein operates within carbohydrate degradation; glycolysis; D-glyceraldehyde 3-phosphate and glycerone phosphate from D-glucose: step 2/4. Functionally, catalyzes the reversible isomerization of glucose-6-phosphate to fructose-6-phosphate. The chain is Glucose-6-phosphate isomerase from Xylella fastidiosa (strain 9a5c).